A 312-amino-acid polypeptide reads, in one-letter code: Pantothenate kinase (312 aa).

An ATP-binding site is contributed by 97–104 (GSVAVGKS).

Belongs to the prokaryotic pantothenate kinase family.

It localises to the cytoplasm. It catalyses the reaction (R)-pantothenate + ATP = (R)-4'-phosphopantothenate + ADP + H(+). The protein operates within cofactor biosynthesis; coenzyme A biosynthesis; CoA from (R)-pantothenate: step 1/5. This is Pantothenate kinase from Mycolicibacterium vanbaalenii (strain DSM 7251 / JCM 13017 / BCRC 16820 / KCTC 9966 / NRRL B-24157 / PYR-1) (Mycobacterium vanbaalenii).